A 244-amino-acid polypeptide reads, in one-letter code: uncharacterized protein (244 aa).

This is an uncharacterized protein from Encephalitozoon cuniculi (strain GB-M1) (Microsporidian parasite).